Reading from the N-terminus, the 71-residue chain is Beta-defensin 25 (71 aa).

A signal peptide spans 1 to 22 (MAKWILLIVALLVLGHVPSGST). 3 disulfides stabilise this stretch: cysteine 27/cysteine 54, cysteine 34/cysteine 48, and cysteine 38/cysteine 55.

The protein belongs to the beta-defensin family.

The protein resides in the secreted. Its function is as follows. Has antibacterial activity. The protein is Beta-defensin 25 (Defb25) of Rattus norvegicus (Rat).